A 605-amino-acid polypeptide reads, in one-letter code: Elongation factor 4 (605 aa).

The 183-residue stretch at 4–186 (SATRNFCIIA…AIVARVPAPK (183 aa)) folds into the tr-type G domain. GTP-binding positions include 16 to 21 (DHGKST) and 133 to 136 (NKID).

This sequence belongs to the TRAFAC class translation factor GTPase superfamily. Classic translation factor GTPase family. LepA subfamily.

It localises to the cell membrane. It catalyses the reaction GTP + H2O = GDP + phosphate + H(+). Functionally, required for accurate and efficient protein synthesis under certain stress conditions. May act as a fidelity factor of the translation reaction, by catalyzing a one-codon backward translocation of tRNAs on improperly translocated ribosomes. Back-translocation proceeds from a post-translocation (POST) complex to a pre-translocation (PRE) complex, thus giving elongation factor G a second chance to translocate the tRNAs correctly. Binds to ribosomes in a GTP-dependent manner. This is Elongation factor 4 from Dehalococcoides mccartyi (strain ATCC BAA-2266 / KCTC 15142 / 195) (Dehalococcoides ethenogenes (strain 195)).